Consider the following 506-residue polypeptide: Cobyric acid synthase (506 aa).

The region spanning 251-448 (DIDIAVVQVP…LHGLFDSDAF (198 aa)) is the GATase cobBQ-type domain. Residue C332 is the Nucleophile of the active site. Residue H440 is part of the active site.

The protein belongs to the CobB/CobQ family. CobQ subfamily.

Its pathway is cofactor biosynthesis; adenosylcobalamin biosynthesis. Its function is as follows. Catalyzes amidations at positions B, D, E, and G on adenosylcobyrinic A,C-diamide. NH(2) groups are provided by glutamine, and one molecule of ATP is hydrogenolyzed for each amidation. This is Cobyric acid synthase from Citrobacter koseri (strain ATCC BAA-895 / CDC 4225-83 / SGSC4696).